A 272-amino-acid chain; its full sequence is MMACHC-like protein (272 aa).

Residues Asp121, 132 to 135, and 146 to 148 each bind substrate; these read ILMQ and YYQ.

This sequence belongs to the MMACHC family. FAD serves as cofactor. It depends on FMN as a cofactor.

The protein resides in the cytoplasm. In terms of biological role, catalyzes the reductive dealkylation of cyanocobalamin to cob(II)alamin, using FAD or FMN as cofactor and NADPH as cosubstrate. Can also catalyze the glutathione-dependent reductive demethylation of methylcobalamin, and, with much lower efficiency, the glutathione-dependent reductive demethylation of adenosylcobalamin. Under anaerobic conditions cob(I)alamin is the first product; it is highly reactive and is converted to aquocob(II)alamin in the presence of oxygen. Binds cyanocobalamin, adenosylcobalamin, methylcobalamin and other, related vitamin B12 derivatives. The protein is MMACHC-like protein (cblc-1) of Caenorhabditis elegans.